The following is a 435-amino-acid chain: Methylenetetrahydrofolate--tRNA-(uracil-5-)-methyltransferase TrmFO (435 aa).

Position 10–15 (10–15 (GAGLAG)) interacts with FAD.

This sequence belongs to the MnmG family. TrmFO subfamily. FAD is required as a cofactor.

It is found in the cytoplasm. It carries out the reaction uridine(54) in tRNA + (6R)-5,10-methylene-5,6,7,8-tetrahydrofolate + NADH + H(+) = 5-methyluridine(54) in tRNA + (6S)-5,6,7,8-tetrahydrofolate + NAD(+). The enzyme catalyses uridine(54) in tRNA + (6R)-5,10-methylene-5,6,7,8-tetrahydrofolate + NADPH + H(+) = 5-methyluridine(54) in tRNA + (6S)-5,6,7,8-tetrahydrofolate + NADP(+). Functionally, catalyzes the folate-dependent formation of 5-methyl-uridine at position 54 (M-5-U54) in all tRNAs. In Halalkalibacterium halodurans (strain ATCC BAA-125 / DSM 18197 / FERM 7344 / JCM 9153 / C-125) (Bacillus halodurans), this protein is Methylenetetrahydrofolate--tRNA-(uracil-5-)-methyltransferase TrmFO.